The chain runs to 270 residues: tRNA pseudouridine synthase A (270 aa).

Asp-60 acts as the Nucleophile in catalysis. Tyr-118 contributes to the substrate binding site.

This sequence belongs to the tRNA pseudouridine synthase TruA family. As to quaternary structure, homodimer.

It carries out the reaction uridine(38/39/40) in tRNA = pseudouridine(38/39/40) in tRNA. In terms of biological role, formation of pseudouridine at positions 38, 39 and 40 in the anticodon stem and loop of transfer RNAs. The chain is tRNA pseudouridine synthase A from Salmonella typhimurium (strain LT2 / SGSC1412 / ATCC 700720).